The following is a 445-amino-acid chain: Phosphoglucosamine mutase (445 aa).

Residue serine 102 is the Phosphoserine intermediate of the active site. The Mg(2+) site is built by serine 102, aspartate 241, aspartate 243, and aspartate 245. Position 102 is a phosphoserine (serine 102).

Belongs to the phosphohexose mutase family. Requires Mg(2+) as cofactor. In terms of processing, activated by phosphorylation.

The catalysed reaction is alpha-D-glucosamine 1-phosphate = D-glucosamine 6-phosphate. Catalyzes the conversion of glucosamine-6-phosphate to glucosamine-1-phosphate. The sequence is that of Phosphoglucosamine mutase from Variovorax paradoxus (strain S110).